The primary structure comprises 615 residues: Glutamine--fructose-6-phosphate aminotransferase [isomerizing] (615 aa).

Cysteine 2 (nucleophile; for GATase activity) is an active-site residue. In terms of domain architecture, Glutamine amidotransferase type-2 spans 2-220 (CGIVGYVGPQ…QDQVVELRRD (219 aa)). 2 consecutive SIS domains span residues 287–427 (IPPG…VRGT) and 460–605 (LARS…VDQP). Lysine 610 functions as the For Fru-6P isomerization activity in the catalytic mechanism.

In terms of assembly, homodimer.

It is found in the cytoplasm. It carries out the reaction D-fructose 6-phosphate + L-glutamine = D-glucosamine 6-phosphate + L-glutamate. Its function is as follows. Catalyzes the first step in hexosamine metabolism, converting fructose-6P into glucosamine-6P using glutamine as a nitrogen source. The protein is Glutamine--fructose-6-phosphate aminotransferase [isomerizing] of Streptomyces coelicolor (strain ATCC BAA-471 / A3(2) / M145).